Here is a 244-residue protein sequence, read N- to C-terminus: 5-oxoprolinase subunit A (244 aa).

The protein belongs to the LamB/PxpA family. Forms a complex composed of PxpA, PxpB and PxpC.

It carries out the reaction 5-oxo-L-proline + ATP + 2 H2O = L-glutamate + ADP + phosphate + H(+). Functionally, catalyzes the cleavage of 5-oxoproline to form L-glutamate coupled to the hydrolysis of ATP to ADP and inorganic phosphate. The chain is 5-oxoprolinase subunit A from Salmonella paratyphi C (strain RKS4594).